Consider the following 93-residue polypeptide: Sec-independent protein translocase protein TatA (93 aa).

A helical membrane pass occupies residues 1–21; the sequence is MGSLSPWHWAILAVVVILLFG. The interval 45-93 is disordered; that stretch reads EMQSENKTETSALGAQSESSAANPTPVQSQRVDPPAPSEQGHSEARPAS. Polar residues predominate over residues 53–75; it reads ETSALGAQSESSAANPTPVQSQR.

The protein belongs to the TatA/E family. The Tat system comprises two distinct complexes: a TatABC complex, containing multiple copies of TatA, TatB and TatC subunits, and a separate TatA complex, containing only TatA subunits. Substrates initially bind to the TatABC complex, which probably triggers association of the separate TatA complex to form the active translocon.

Its subcellular location is the cell membrane. Part of the twin-arginine translocation (Tat) system that transports large folded proteins containing a characteristic twin-arginine motif in their signal peptide across membranes. TatA could form the protein-conducting channel of the Tat system. The polypeptide is Sec-independent protein translocase protein TatA (Mycolicibacterium paratuberculosis (strain ATCC BAA-968 / K-10) (Mycobacterium paratuberculosis)).